A 388-amino-acid chain; its full sequence is UDP-N-acetylglucosamine--N-acetylmuramyl-(pentapeptide) pyrophosphoryl-undecaprenol N-acetylglucosamine transferase (388 aa).

UDP-N-acetyl-alpha-D-glucosamine-binding positions include Thr15 to Gly17, Asn125, Arg168, Ser196, and Gln297.

The protein belongs to the glycosyltransferase 28 family. MurG subfamily.

The protein resides in the cell inner membrane. It catalyses the reaction di-trans,octa-cis-undecaprenyl diphospho-N-acetyl-alpha-D-muramoyl-L-alanyl-D-glutamyl-meso-2,6-diaminopimeloyl-D-alanyl-D-alanine + UDP-N-acetyl-alpha-D-glucosamine = di-trans,octa-cis-undecaprenyl diphospho-[N-acetyl-alpha-D-glucosaminyl-(1-&gt;4)]-N-acetyl-alpha-D-muramoyl-L-alanyl-D-glutamyl-meso-2,6-diaminopimeloyl-D-alanyl-D-alanine + UDP + H(+). Its pathway is cell wall biogenesis; peptidoglycan biosynthesis. Cell wall formation. Catalyzes the transfer of a GlcNAc subunit on undecaprenyl-pyrophosphoryl-MurNAc-pentapeptide (lipid intermediate I) to form undecaprenyl-pyrophosphoryl-MurNAc-(pentapeptide)GlcNAc (lipid intermediate II). The sequence is that of UDP-N-acetylglucosamine--N-acetylmuramyl-(pentapeptide) pyrophosphoryl-undecaprenol N-acetylglucosamine transferase from Novosphingobium aromaticivorans (strain ATCC 700278 / DSM 12444 / CCUG 56034 / CIP 105152 / NBRC 16084 / F199).